Reading from the N-terminus, the 81-residue chain is Putative membrane protein insertion efficiency factor (81 aa).

Positions 61-81 (NPGGYDPVPPIPTSRSSSMAE) are disordered.

This sequence belongs to the UPF0161 family.

It localises to the cell inner membrane. Its function is as follows. Could be involved in insertion of integral membrane proteins into the membrane. The chain is Putative membrane protein insertion efficiency factor from Pseudomonas fluorescens (strain Pf0-1).